A 435-amino-acid polypeptide reads, in one-letter code: Keratin, type I cytoskeletal 18 (435 aa).

Residues 2–84 (SYRPGSYSVS…SVSGSGLVGN (83 aa)) form a head region. Residues 85 to 120 (EKETMIGLNDRLAAYLETVRNLEQANSKLEFQIREA) form a coil 1A region. One can recognise an IF rod domain in the interval 85–396 (EKETMIGLND…RLLDGEDFRL (312 aa)). Residues 121-137 (LEKKGPTTRDLSPFEKT) are linker 1. Positions 138–229 (LEDLRKKVYD…QNHNQEVNDL (92 aa)) are coil 1B. Positions 230 to 253 (RNQIAQSGVQVDVDAPKGQDLAQV) are linker 12. The coil 2 stretch occupies residues 254-391 (LAEVRAQYES…IATYRRLLDG (138 aa)). The interval 392 to 435 (EDFRLQDALVDQSSTKSIKKVTVTQTLVDGKVVSESTNTKEIGK) is tail.

This sequence belongs to the intermediate filament family. Heterotetramer of two type I and two type II keratins. Keratin-18 associates with keratin-8. In terms of processing, phosphorylated. Proteolytically cleaved by caspases during epithelial cell apoptosis.

In terms of biological role, when phosphorylated, plays a role in filament reorganization. The sequence is that of Keratin, type I cytoskeletal 18 from Acipenser baerii (Siberian sturgeon).